The primary structure comprises 698 residues: Serotransferrin (698 aa).

The signal sequence occupies residues 1–19 (MRLAVGALLVCAVLGLCLA). Transferrin-like domains follow at residues 25 to 347 (VRWC…NLRE) and 361 to 683 (VKWC…NLRK). 2 disulfides stabilise this stretch: Cys-28/Cys-67 and Cys-38/Cys-58. Arg-42 bears the Dimethylated arginine mark. The O-linked (GalNAc...) serine glycan is linked to Ser-51. Positions 82 and 114 each coordinate Fe(3+). Disulfide bonds link Cys-137–Cys-213, Cys-156–Cys-350, Cys-177–Cys-193, Cys-180–Cys-196, Cys-190–Cys-198, Cys-246–Cys-260, Cys-358–Cys-615, Cys-364–Cys-396, Cys-374–Cys-387, Cys-421–Cys-693, Cys-437–Cys-656, Cys-469–Cys-542, Cys-493–Cys-684, Cys-503–Cys-517, Cys-514–Cys-525, Cys-582–Cys-596, and Cys-634–Cys-639. Positions 139, 143, 145, and 146 each coordinate hydrogencarbonate. Residue Tyr-207 participates in Fe(3+) binding. His-268 is a Fe(3+) binding site. A Phosphoserine modification is found at Ser-389. Residues Asp-411 and Tyr-445 each coordinate Fe(3+). Residues Thr-471, Arg-475, Ala-477, and Gly-478 each coordinate hydrogencarbonate. Tyr-536 lines the Fe(3+) pocket. Residue His-604 coordinates Fe(3+). N-linked (GlcNAc...) asparagine glycosylation occurs at Asn-630. Ser-685 carries the phosphoserine modification.

This sequence belongs to the transferrin family. As to quaternary structure, monomer. Part of a complex composed of SLC40A1/ferroportin, TF/transferrin and HEPH/hephaestin that transfers iron from cells to transferrin. As to expression, expressed by the liver and secreted in plasma.

Its subcellular location is the secreted. Functionally, transferrins are iron binding transport proteins which can bind two Fe(3+) ions in association with the binding of an anion, usually bicarbonate. It is responsible for the transport of iron from sites of absorption and heme degradation to those of storage and utilization. Serum transferrin may also have a further role in stimulating cell proliferation. The polypeptide is Serotransferrin (TF) (Pan troglodytes (Chimpanzee)).